A 122-amino-acid chain; its full sequence is Fluoride-specific ion channel FluC 2 (122 aa).

4 helical membrane passes run 4-24, 38-58, 63-83, and 96-116; these read VAVWVGVALIGGVGSVLRFVV, LGTLVVNLSGAALLGFLGGLA, AALLAGTAFVGAYTTFSTWML, and AALANIVVSVVLGGAAAFIGQ. Residues glycine 73 and threonine 76 each contribute to the Na(+) site.

Belongs to the fluoride channel Fluc/FEX (TC 1.A.43) family.

The protein resides in the cell membrane. It carries out the reaction fluoride(in) = fluoride(out). Its activity is regulated as follows. Na(+) is not transported, but it plays an essential structural role and its presence is essential for fluoride channel function. Its function is as follows. Fluoride-specific ion channel. Important for reducing fluoride concentration in the cell, thus reducing its toxicity. The polypeptide is Fluoride-specific ion channel FluC 2 (Mycolicibacterium paratuberculosis (strain ATCC BAA-968 / K-10) (Mycobacterium paratuberculosis)).